A 191-amino-acid polypeptide reads, in one-letter code: Peptidyl-tRNA hydrolase (191 aa).

Tyr16 is a binding site for tRNA. Residue His21 is the Proton acceptor of the active site. Positions 67, 69, and 115 each coordinate tRNA.

The protein belongs to the PTH family. In terms of assembly, monomer.

It is found in the cytoplasm. It carries out the reaction an N-acyl-L-alpha-aminoacyl-tRNA + H2O = an N-acyl-L-amino acid + a tRNA + H(+). Functionally, hydrolyzes ribosome-free peptidyl-tRNAs (with 1 or more amino acids incorporated), which drop off the ribosome during protein synthesis, or as a result of ribosome stalling. In terms of biological role, catalyzes the release of premature peptidyl moieties from peptidyl-tRNA molecules trapped in stalled 50S ribosomal subunits, and thus maintains levels of free tRNAs and 50S ribosomes. The protein is Peptidyl-tRNA hydrolase of Wigglesworthia glossinidia brevipalpis.